The chain runs to 319 residues: Methionyl-tRNA formyltransferase (319 aa).

(6S)-5,6,7,8-tetrahydrofolate is bound at residue 116 to 119 (SLLP).

This sequence belongs to the Fmt family.

It carries out the reaction L-methionyl-tRNA(fMet) + (6R)-10-formyltetrahydrofolate = N-formyl-L-methionyl-tRNA(fMet) + (6S)-5,6,7,8-tetrahydrofolate + H(+). In terms of biological role, attaches a formyl group to the free amino group of methionyl-tRNA(fMet). The formyl group appears to play a dual role in the initiator identity of N-formylmethionyl-tRNA by promoting its recognition by IF2 and preventing the misappropriation of this tRNA by the elongation apparatus. This Chlorobium phaeovibrioides (strain DSM 265 / 1930) (Prosthecochloris vibrioformis (strain DSM 265)) protein is Methionyl-tRNA formyltransferase.